A 420-amino-acid chain; its full sequence is Serine hydroxymethyltransferase (420 aa).

(6S)-5,6,7,8-tetrahydrofolate contacts are provided by residues Leu121 and 125–127; that span reads GHL. Lys230 carries the N6-(pyridoxal phosphate)lysine modification.

Belongs to the SHMT family. As to quaternary structure, homodimer. Pyridoxal 5'-phosphate is required as a cofactor.

Its subcellular location is the cytoplasm. The enzyme catalyses (6R)-5,10-methylene-5,6,7,8-tetrahydrofolate + glycine + H2O = (6S)-5,6,7,8-tetrahydrofolate + L-serine. Its pathway is one-carbon metabolism; tetrahydrofolate interconversion. It participates in amino-acid biosynthesis; glycine biosynthesis; glycine from L-serine: step 1/1. Its function is as follows. Catalyzes the reversible interconversion of serine and glycine with tetrahydrofolate (THF) serving as the one-carbon carrier. This reaction serves as the major source of one-carbon groups required for the biosynthesis of purines, thymidylate, methionine, and other important biomolecules. Also exhibits THF-independent aldolase activity toward beta-hydroxyamino acids, producing glycine and aldehydes, via a retro-aldol mechanism. The sequence is that of Serine hydroxymethyltransferase from Streptomyces avermitilis (strain ATCC 31267 / DSM 46492 / JCM 5070 / NBRC 14893 / NCIMB 12804 / NRRL 8165 / MA-4680).